Consider the following 61-residue polypeptide: uncharacterized protein (61 aa).

Residues 38–61 (TPRPFTPGLADPRRLGPRRVQAAQ) are disordered.

This is an uncharacterized protein from Homo sapiens (Human).